The primary structure comprises 179 residues: Large ribosomal subunit protein uL5 (179 aa).

This sequence belongs to the universal ribosomal protein uL5 family. As to quaternary structure, part of the 50S ribosomal subunit; part of the 5S rRNA/L5/L18/L25 subcomplex. Contacts the 5S rRNA and the P site tRNA. Forms a bridge to the 30S subunit in the 70S ribosome.

Its function is as follows. This is one of the proteins that bind and probably mediate the attachment of the 5S RNA into the large ribosomal subunit, where it forms part of the central protuberance. In the 70S ribosome it contacts protein S13 of the 30S subunit (bridge B1b), connecting the 2 subunits; this bridge is implicated in subunit movement. Contacts the P site tRNA; the 5S rRNA and some of its associated proteins might help stabilize positioning of ribosome-bound tRNAs. The protein is Large ribosomal subunit protein uL5 of Polaromonas naphthalenivorans (strain CJ2).